Here is a 327-residue protein sequence, read N- to C-terminus: tRNA uridine(34) hydroxylase (327 aa).

Residues 123–217 (SDPEVLLVDT…YLEEVKLEES (95 aa)) form the Rhodanese domain. The Cysteine persulfide intermediate role is filled by Cys-177.

The protein belongs to the TrhO family.

The enzyme catalyses uridine(34) in tRNA + AH2 + O2 = 5-hydroxyuridine(34) in tRNA + A + H2O. Catalyzes oxygen-dependent 5-hydroxyuridine (ho5U) modification at position 34 in tRNAs. This chain is tRNA uridine(34) hydroxylase, found in Shewanella pealeana (strain ATCC 700345 / ANG-SQ1).